Here is an 861-residue protein sequence, read N- to C-terminus: Glucans biosynthesis glucosyltransferase H (861 aa).

6 helical membrane passes run 142–162 (FILLLLMLAQTSVATYYMKGI), 188–208 (VLPYVIQFGILALFAILFCWV), 516–536 (VFLTGVMSYLSAPLWFFFLVL), 573–593 (LFSTTLTLLFLPKLLSVMLIW), 600–620 (FGGVIRVTLSMLLEMFFSVLL), and 683–703 (FLWWLSPIVGSLILSIPVSVI).

This sequence belongs to the glycosyltransferase 2 family. OpgH subfamily.

Its subcellular location is the cell inner membrane. It participates in glycan metabolism; osmoregulated periplasmic glucan (OPG) biosynthesis. Involved in the biosynthesis of osmoregulated periplasmic glucans (OPGs). The polypeptide is Glucans biosynthesis glucosyltransferase H (Pseudomonas aeruginosa (strain LESB58)).